The primary structure comprises 644 residues: Exoribonuclease 2 (644 aa).

The 328-residue stretch at 189–516 (REDLTALDFV…NHRLLKAIIK (328 aa)) folds into the RNB domain. The 83-residue stretch at 561-643 (DSRFAAEIID…ETRSVIARPV (83 aa)) folds into the S1 motif domain.

The protein belongs to the RNR ribonuclease family. RNase II subfamily.

It is found in the cytoplasm. It catalyses the reaction Exonucleolytic cleavage in the 3'- to 5'-direction to yield nucleoside 5'-phosphates.. Involved in mRNA degradation. Hydrolyzes single-stranded polyribonucleotides processively in the 3' to 5' direction. The protein is Exoribonuclease 2 of Cronobacter sakazakii (strain ATCC BAA-894) (Enterobacter sakazakii).